A 500-amino-acid chain; its full sequence is Glycerol kinase (500 aa).

Thr-11 contacts ADP. Positions 11, 12, and 13 each coordinate ATP. Position 11 (Thr-11) interacts with sn-glycerol 3-phosphate. Position 15 (Arg-15) interacts with ADP. Residues Arg-81, Glu-82, Tyr-133, and Asp-242 each contribute to the sn-glycerol 3-phosphate site. Positions 81, 82, 133, 242, and 243 each coordinate glycerol. Residues Thr-264 and Gly-307 each contribute to the ADP site. ATP-binding residues include Thr-264, Gly-307, Gln-311, and Gly-411. Gly-411 lines the ADP pocket.

It belongs to the FGGY kinase family.

It catalyses the reaction glycerol + ATP = sn-glycerol 3-phosphate + ADP + H(+). It functions in the pathway polyol metabolism; glycerol degradation via glycerol kinase pathway; sn-glycerol 3-phosphate from glycerol: step 1/1. With respect to regulation, inhibited by fructose 1,6-bisphosphate (FBP). Key enzyme in the regulation of glycerol uptake and metabolism. Catalyzes the phosphorylation of glycerol to yield sn-glycerol 3-phosphate. The chain is Glycerol kinase from Rhodopseudomonas palustris (strain BisA53).